Reading from the N-terminus, the 95-residue chain is Non-specific lipid-transfer protein (95 aa).

Intrachain disulfides connect cysteine 4-cysteine 52, cysteine 14-cysteine 29, and cysteine 50-cysteine 90.

It belongs to the plant LTP family. As to expression, seeds.

Plant non-specific lipid-transfer proteins transfer phospholipids as well as galactolipids across membranes. May play a role in wax or cutin deposition in the cell walls of expanding epidermal cells and certain secretory tissues. In Eleusine coracana (Indian finger millet), this protein is Non-specific lipid-transfer protein.